The sequence spans 433 residues: G-protein coupled receptor 22 (433 aa).

Residues 1–45 lie on the Extracellular side of the membrane; it reads MCFSPILEINMQSESNITVRDDIDDINTNMYQPLSYPLSFQVSLT. N-linked (GlcNAc...) asparagine glycosylation occurs at N16. A helical membrane pass occupies residues 46–66; it reads GFLMLEIVLGLGSNLTVLVLY. Residues 67 to 85 are Cytoplasmic-facing; that stretch reads CMKSNLINSVSNIITMNLH. The chain crosses the membrane as a helical span at residues 86 to 106; it reads VLDVIICVGCIPLTIVILLLS. Topologically, residues 107 to 115 are extracellular; it reads LESNTALIC. A helical transmembrane segment spans residues 116-136; the sequence is CFHEACVSFASVSTAINVFAI. Over 137-156 the chain is Cytoplasmic; it reads TLDRYDISVKPANRILTMGR. Residues 157-177 traverse the membrane as a helical segment; the sequence is AVMLMISIWIFSFFSFLIPFI. At 178–208 the chain is on the extracellular side; the sequence is EVNFFSLQSGNTWENKTLLCVSTNEYYTELG. N-linked (GlcNAc...) asparagine glycosylation is present at N192. The chain crosses the membrane as a helical span at residues 209–229; that stretch reads MYYHLLVQIPIFFFTVVVMLI. At 230–315 the chain is on the cytoplasmic side; it reads TYTKILQALN…ERQKRVFRMS (86 aa). The helical transmembrane segment at 316-336 threads the bilayer; it reads LLIISTFLLCWTPISVLNTTI. The Extracellular segment spans residues 337–349; the sequence is LCLGPSDLLVKLR. Residues 350–370 form a helical membrane-spanning segment; it reads LCFLVMAYGTTIFHPLLYAFT. The Cytoplasmic segment spans residues 371–433; the sequence is RQKFQKVLKS…KCLVPQVVTD (63 aa).

Belongs to the G-protein coupled receptor 1 family. In terms of tissue distribution, high expression in adult and fetal heart tissue. Expressed in the brain, with enrichment in the accumbens, amygdala, cerebellum, cortex, and hippocampus regions.

It is found in the cell membrane. Functionally, orphan G-protein coupled receptor. Seems to act through a G(i)/G(o) mediated pathway. May be involved in ciliogenesis. The sequence is that of G-protein coupled receptor 22 from Homo sapiens (Human).